The chain runs to 181 residues: Peptidyl-tRNA hydrolase (181 aa).

Position 14 (Y14) interacts with tRNA. The Proton acceptor role is filled by H19. TRNA contacts are provided by F60, N62, and N106.

Belongs to the PTH family. Monomer.

Its subcellular location is the cytoplasm. It catalyses the reaction an N-acyl-L-alpha-aminoacyl-tRNA + H2O = an N-acyl-L-amino acid + a tRNA + H(+). Its function is as follows. Hydrolyzes ribosome-free peptidyl-tRNAs (with 1 or more amino acids incorporated), which drop off the ribosome during protein synthesis, or as a result of ribosome stalling. Functionally, catalyzes the release of premature peptidyl moieties from peptidyl-tRNA molecules trapped in stalled 50S ribosomal subunits, and thus maintains levels of free tRNAs and 50S ribosomes. The chain is Peptidyl-tRNA hydrolase from Campylobacter curvus (strain 525.92).